Reading from the N-terminus, the 88-residue chain is MQEFALSLLVLLAGLPTLDANDPEDKDSPFYYDWHSLRVGGLICAGILCALGIIVLMSGKCKCKFSQKPSHRPGDGPPLITPGSAHNC.

The signal sequence occupies residues 1–20 (MQEFALSLLVLLAGLPTLDA). Over 21–38 (NDPEDKDSPFYYDWHSLR) the chain is Extracellular. Residues 39 to 59 (VGGLICAGILCALGIIVLMSG) traverse the membrane as a helical segment. Topologically, residues 60–88 (KCKCKFSQKPSHRPGDGPPLITPGSAHNC) are cytoplasmic. Positions 66 to 88 (SQKPSHRPGDGPPLITPGSAHNC) are disordered.

Belongs to the FXYD family. Regulatory subunit of the sodium/potassium-transporting ATPase which is composed of a catalytic alpha subunit, a non-catalytic beta subunit and an additional regulatory subunit. Interacts with catalytic alpha subunit ATP1A1. Also interacts with non-catalytic beta subunit ATP1B1. Interacts with the alpha1-beta1, alpha2-beta1 and alpha3-beta1 NKA isozymes. In terms of processing, glutathionylated.

The protein localises to the cell membrane. In terms of biological role, associates with and regulates the activity of the sodium/potassium-transporting ATPase (NKA) which transports Na(+) out of the cell and K(+) into the cell. Reduces glutathionylation of the NKA beta-1 subunit ATP1B1, thus reversing glutathionylation-mediated inhibition of ATP1B1. Induces a hyperpolarization-activated chloride current when expressed in Xenopus oocytes. In Rattus norvegicus (Rat), this protein is FXYD domain-containing ion transport regulator 3 (Fxyd3).